Here is a 173-residue protein sequence, read N- to C-terminus: Ribosome maturation factor RimP (173 aa).

The protein belongs to the RimP family.

The protein localises to the cytoplasm. In terms of biological role, required for maturation of 30S ribosomal subunits. The chain is Ribosome maturation factor RimP from Chlorobium phaeobacteroides (strain DSM 266 / SMG 266 / 2430).